Consider the following 301-residue polypeptide: MPSNSASERSTTIPDRTPGELVVVTGMTGAGRSTAAKELEDLGYYVVDNLPPSLLRDVVRLVDETRGTAQPIAVVVDVRSGSFFQTLQANLAQGATGRHATLVFLEADDDVLVRRQEAARRPHPLQGGGRLIDGLVRERGVLADLRGDADLVIDTTGLNVHQLTDRIADAFGTPDTVRLKVTVISFGFKYGIPVDADFVADMRFLPNPHWIPELRPRTGRDAAVADYVMAQPAAAEFLDAYVPVLEGVASGYLREGKRFMTIAIGCTGGKHRSVAMTEEISRRLGEAGYETRSTHRDLGRE.

Residue 26 to 33 (GMTGAGRS) participates in ATP binding. 77–80 (DVRS) is a GTP binding site.

Belongs to the RapZ-like family.

In terms of biological role, displays ATPase and GTPase activities. The sequence is that of Nucleotide-binding protein Noca_2527 from Nocardioides sp. (strain ATCC BAA-499 / JS614).